Here is an 82-residue protein sequence, read N- to C-terminus: UPF0213 protein SSP2268 (82 aa).

Positions 2–77 (DKHYIYIVKC…KTFSRQKKLK (76 aa)) constitute a GIY-YIG domain.

Belongs to the UPF0213 family.

In Staphylococcus saprophyticus subsp. saprophyticus (strain ATCC 15305 / DSM 20229 / NCIMB 8711 / NCTC 7292 / S-41), this protein is UPF0213 protein SSP2268.